A 222-amino-acid chain; its full sequence is Triosephosphate isomerase (222 aa).

9–11 provides a ligand contact to substrate; that stretch reads NYK. Catalysis depends on His93, which acts as the Electrophile. Catalysis depends on Glu141, which acts as the Proton acceptor. Residues Ile146, Gly181, and 202–203 each bind substrate; that span reads AS.

It belongs to the triosephosphate isomerase family. Homotetramer; dimer of dimers.

It localises to the cytoplasm. The enzyme catalyses D-glyceraldehyde 3-phosphate = dihydroxyacetone phosphate. The protein operates within carbohydrate biosynthesis; gluconeogenesis. Its pathway is carbohydrate degradation; glycolysis; D-glyceraldehyde 3-phosphate from glycerone phosphate: step 1/1. Its function is as follows. Involved in the gluconeogenesis. Catalyzes stereospecifically the conversion of dihydroxyacetone phosphate (DHAP) to D-glyceraldehyde-3-phosphate (G3P). This Methanosarcina acetivorans (strain ATCC 35395 / DSM 2834 / JCM 12185 / C2A) protein is Triosephosphate isomerase.